Consider the following 722-residue polypeptide: MQRRARGASSLRLARCLTPANLIRGANAGVPERRIFAGCLLPTPEGLLSAAVGVLRQRADDLQPAFLTGADRSVRLAARHHNTVPESLIVDGLASDPHYDYIRHYASAAKQALGEVELSGGQLSRAILAQYWKYLQTVVPSGLDIPDDPAGDCDPSLHVLLRPTLLPKLLVRAPFKSGAAAAKYAAAVAGLRDAAHRLQQYMFFMRPADPSRPSTDTALRLSELLAYVSVLYHWASWMLWTADKYVCRRLGPADRRFVALSGSLEAPAETFARHLDRGPSGTTGSMQCMALRAAVSDVLGHLTRLAHLWETGKRSGGTYGIVDAIVSTVEVLSIVHHHAQYIINATLTGYVVWASDSLNNEYLTAAVDSQERFCRTAAPLFPTMTAPSWARMELSIKSWFGAALAPDLLRSGTPSPHYESILRLAASGPPGGRGAVGGSCRDKIQRTRRDNAPPPLPRARPHSTPAAPRRCRRHREDLPEPPHVDAADRGPEPCAGRPATYYTHMAGAPPRLPPRNPAPPEQRPAAAARPLAAQREAAGVYDAVRTWGPDAEAEPDQMENTYLLPDDDAAMPAGVGLGATPAADTTAAAAWPAESHAPRAPSEDADSIYESVGEDGGRVYEEIPWVRVYENICPRRRLAGGAALPGDAPDSPYIEAENPLYDWGGSALFSPRRATRAPDPGLSLSPMPARPRTNALANDGPTNVAALSALLTKLKRGRHQSH.

Positions 423 to 534 are disordered; sequence RLAASGPPGG…AAAARPLAAQ (112 aa). Basic and acidic residues-rich tracts occupy residues 440 to 451 and 474 to 491; these read CRDKIQRTRRDN and HRED…DRGP. Positions 510–522 are enriched in pro residues; the sequence is PRLPPRNPAPPEQ. The segment covering 523-534 has biased composition (low complexity); that stretch reads RPAAAARPLAAQ.

This sequence belongs to the herpesviridae HHV-1 VP11/12 protein family. In terms of assembly, interacts with VP16. Interacts with host LCK, PIK3R1, SHC1 AND GRB2; these interactions promote the activation of the PI3K/AKT pathway. Interacts with host YWHAB. Interacts with ICP0; this interaction targets UL46 for degradation by the proteasome. Phosphorylated by host LCK. The phosphorylation seems to be lymphocyte-specific.

The protein localises to the virion tegument. It localises to the host cell membrane. In terms of biological role, plays a role in the activation of the host PI3K/AKT pathway to promote cell survival. Interacts with and activates host LCK and thereby recruits downstream partners SHC1, GRB2 and PI3KR1 in order to activate the PI3K pathway by phosphorylating host AKT on its activating residues. This mechanism is inhibited by the viral protein US3 that instead promotes incorporation of UL46 into virions. The chain is Tegument protein UL46 from Homo sapiens (Human).